The sequence spans 130 residues: Small ribosomal subunit protein uS9 (130 aa).

Belongs to the universal ribosomal protein uS9 family.

This Shigella dysenteriae serotype 1 (strain Sd197) protein is Small ribosomal subunit protein uS9.